The chain runs to 399 residues: S-adenosylmethionine synthase (399 aa).

Residue His17 participates in ATP binding. Asp19 contacts Mg(2+). Glu45 contributes to the K(+) binding site. L-methionine is bound by residues Glu58 and Gln101. Residues 101 to 111 (QSPDIAQGVDE) form a flexible loop region. ATP is bound by residues 177-179 (DAK), 244-245 (RF), Asp253, 259-260 (RK), Ala276, and Lys280. Asp253 is a binding site for L-methionine. Position 284 (Lys284) interacts with L-methionine.

Belongs to the AdoMet synthase family. Homotetramer; dimer of dimers. The cofactor is Mg(2+). Requires K(+) as cofactor.

The protein resides in the cytoplasm. It carries out the reaction L-methionine + ATP + H2O = S-adenosyl-L-methionine + phosphate + diphosphate. It functions in the pathway amino-acid biosynthesis; S-adenosyl-L-methionine biosynthesis; S-adenosyl-L-methionine from L-methionine: step 1/1. Functionally, catalyzes the formation of S-adenosylmethionine (AdoMet) from methionine and ATP. The overall synthetic reaction is composed of two sequential steps, AdoMet formation and the subsequent tripolyphosphate hydrolysis which occurs prior to release of AdoMet from the enzyme. The sequence is that of S-adenosylmethionine synthase from Listeria innocua serovar 6a (strain ATCC BAA-680 / CLIP 11262).